The following is a 261-amino-acid chain: 2-phytyl-1,4-beta-naphthoquinone methyltransferase, chloroplastic (261 aa).

The N-terminal 30 residues, Met1–Lys30, are a transit peptide targeting the chloroplast.

It belongs to the class I-like SAM-binding methyltransferase superfamily. MenG/UbiE family.

Its subcellular location is the plastid. It localises to the chloroplast. The catalysed reaction is demethylphylloquinol + S-adenosyl-L-methionine = phylloquinol + S-adenosyl-L-homocysteine + H(+). Involved in the biosynthesis of phylloquinone (vitamin K1). Methyltransferase required for the conversion of 2-phytyl-1,4-beta-naphthoquinol to phylloquinol. The sequence is that of 2-phytyl-1,4-beta-naphthoquinone methyltransferase, chloroplastic from Arabidopsis thaliana (Mouse-ear cress).